A 346-amino-acid polypeptide reads, in one-letter code: D-alanine--D-alanine ligase (346 aa).

The ATP-grasp domain maps to 133-324 (KLYAQSVGVK…IVDNLAKNIE (192 aa)). 159–211 (LSFPCILKPARLGSSIGISIVKDESELKYAKDVAFEFDEDVVVEQFVSNIKEY) provides a ligand contact to ATP. Residues Asp284, Glu296, and Asn298 each contribute to the Mg(2+) site.

It belongs to the D-alanine--D-alanine ligase family. It depends on Mg(2+) as a cofactor. Requires Mn(2+) as cofactor.

It localises to the cytoplasm. The catalysed reaction is 2 D-alanine + ATP = D-alanyl-D-alanine + ADP + phosphate + H(+). The protein operates within cell wall biogenesis; peptidoglycan biosynthesis. Its function is as follows. Cell wall formation. The protein is D-alanine--D-alanine ligase of Campylobacter lari (strain RM2100 / D67 / ATCC BAA-1060).